Consider the following 37-residue polypeptide: Large ribosomal subunit protein bL36c (37 aa).

The protein belongs to the bacterial ribosomal protein bL36 family.

The protein localises to the plastid. The sequence is that of Large ribosomal subunit protein bL36c from Cuscuta gronovii (Common dodder).